Consider the following 317-residue polypeptide: Melanocyte-stimulating hormone receptor (317 aa).

At 1 to 37 (MAVQGSQRRLLGSLNSTPTAIPQLGLAANQTGARCLE) the chain is on the extracellular side. A glycan (N-linked (GlcNAc...) asparagine) is linked at N29. The chain crosses the membrane as a helical span at residues 38–63 (VSISDGLFLSLGLVSLVENALVVATI). Residues 64 to 72 (AKNRNLHSP) lie on the Cytoplasmic side of the membrane. A helical membrane pass occupies residues 73-93 (MYCFICCLALSDLLVSGSNVL). The Extracellular portion of the chain corresponds to 94 to 118 (ETAVILLLEAGALVARAAVLQQLDN). Residues 119 to 140 (VIDVITCSSMLSSLCFLGAIAV) form a helical membrane-spanning segment. Over 141-163 (DRYISIFYALRYHSIVTLPRARR) the chain is Cytoplasmic. Residues 164-183 (AVAAIWVASVVFSTLFIAYY) traverse the membrane as a helical segment. Residues 184 to 191 (DHVAVLLC) lie on the Extracellular side of the membrane. A helical membrane pass occupies residues 192 to 211 (LVVFFLAMLVLMAVLYVHML). The Cytoplasmic segment spans residues 212 to 240 (ARACQHAQGIARLHKRQRPVHQGFGLKGA). Residues 241–266 (VTLTILLGIFFLCWGPFFLHLTLIVL) form a helical membrane-spanning segment. Over 267–279 (CPEHPTCGCIFKN) the chain is Extracellular. The helical transmembrane segment at 280 to 300 (FNLFLALIICNAIIDPLIYAF) threads the bilayer. Residues 301–317 (HSQELRRTLKEVLTCSW) lie on the Cytoplasmic side of the membrane. C315 is lipidated: S-palmitoyl cysteine.

The protein belongs to the G-protein coupled receptor 1 family. In terms of assembly, interacts with MGRN1, but does not undergo MGRN1-mediated ubiquitination; this interaction competes with GNAS-binding and thus inhibits agonist-induced cAMP production. Interacts with OPN3; the interaction results in a decrease in MC1R-mediated cAMP signaling and ultimately a decrease in melanin production in melanocytes. As to expression, expressed in melanocytes. Expressed in corticoadrenal tissue.

It localises to the cell membrane. Its function is as follows. Receptor for MSH (alpha, beta and gamma) and ACTH. The activity of this receptor is mediated by G proteins which activate adenylate cyclase. Mediates melanogenesis, the production of eumelanin (black/brown) and phaeomelanin (red/yellow), via regulation of cAMP signaling in melanocytes. The protein is Melanocyte-stimulating hormone receptor (MC1R) of Homo sapiens (Human).